Reading from the N-terminus, the 79-residue chain is Sec-independent protein translocase protein TatA (79 aa).

The helical transmembrane segment at 1 to 21 (MGGFTSIWHWVIVLLVIVLLF) threads the bilayer. The interval 48–79 (EEEAKNEPKTLDAQVTQAKVHESSEIKNKQEG) is disordered. A compositionally biased stretch (basic and acidic residues) spans 66–79 (KVHESSEIKNKQEG).

It belongs to the TatA/E family. The Tat system comprises two distinct complexes: a TatABC complex, containing multiple copies of TatA, TatB and TatC subunits, and a separate TatA complex, containing only TatA subunits. Substrates initially bind to the TatABC complex, which probably triggers association of the separate TatA complex to form the active translocon.

The protein resides in the cell inner membrane. Its function is as follows. Part of the twin-arginine translocation (Tat) system that transports large folded proteins containing a characteristic twin-arginine motif in their signal peptide across membranes. TatA could form the protein-conducting channel of the Tat system. This is Sec-independent protein translocase protein TatA from Helicobacter acinonychis (strain Sheeba).